The sequence spans 429 residues: Histidine--tRNA ligase (429 aa).

The protein belongs to the class-II aminoacyl-tRNA synthetase family. Homodimer.

It localises to the cytoplasm. It catalyses the reaction tRNA(His) + L-histidine + ATP = L-histidyl-tRNA(His) + AMP + diphosphate + H(+). The polypeptide is Histidine--tRNA ligase (Pelodictyon phaeoclathratiforme (strain DSM 5477 / BU-1)).